Reading from the N-terminus, the 399-residue chain is Phosphoglycerate kinase (399 aa).

Substrate-binding positions include 22 to 24 (DFN), Arg38, 61 to 64 (HLGR), Arg120, and Arg153. Residues Lys204, Glu326, and 353–356 (GGDT) each bind ATP.

The protein belongs to the phosphoglycerate kinase family. In terms of assembly, monomer.

It is found in the cytoplasm. It catalyses the reaction (2R)-3-phosphoglycerate + ATP = (2R)-3-phospho-glyceroyl phosphate + ADP. It participates in carbohydrate degradation; glycolysis; pyruvate from D-glyceraldehyde 3-phosphate: step 2/5. This chain is Phosphoglycerate kinase, found in Geotalea daltonii (strain DSM 22248 / JCM 15807 / FRC-32) (Geobacter daltonii).